The chain runs to 894 residues: E3 ubiquitin-protein ligase SH3RF1 (894 aa).

An RING-type zinc finger spans residues 12–53; it reads CPVCLERLDASAKVLPCQHTFCKRCLLGIVGSRNELRCPECR. 2 SH3 domains span residues 134 to 193 and 196 to 259; these read PQLP…IIKP and QPPP…FNSA. The segment at 274-323 is disordered; the sequence is VDTAECPSATAAQSSSASKHSDTKKNTRKRHSFTSLTMANKSSQASQNRH. Positions 281–291 are enriched in low complexity; sequence SATAAQSSSAS. The interaction with RAC1 stretch occupies residues 293 to 363; it reads HSDTKKNTRK…APSQVHISTT (71 aa). S305 carries the post-translational modification Phosphoserine. The segment covering 306–322 has biased composition (polar residues); the sequence is FTSLTMANKSSQASQNR. The interaction with AKT2 stretch occupies residues 448–551; the sequence is HLRPQTRPSV…STAGGPAQKP (104 aa). The SH3 3 domain maps to 453–514; the sequence is TRPSVYVAIY…PGNYVAPVTR (62 aa). 2 disordered regions span residues 526–556 and 682–751; these read MSTAGQASRGVTMVSPSTAGGPAQKPQGNGV and LETE…PTLD. S540 carries the post-translational modification Phosphoserine. The segment covering 700 to 713 has biased composition (polar residues); sequence SPESAASACGNSSA. The segment covering 715 to 726 has biased composition (basic and acidic residues); that stretch reads KPDKDSKKEKKG. S743 is modified (phosphoserine). The SH3 4 domain maps to 835-894; sequence VVCERHRVVVSYPPQSEAELELKEGDIVFVHKKREDGWFKGTLQRNGKTGLFPGSFVENI.

Belongs to the SH3RF family. As to quaternary structure, interacts with HERP1. Interacts with RAC1; in a GTP-dependent manner. Interacts with MAP3K10/MLK2 and MAP3K11/MLK3. Interacts with MAPK8IP; this interaction leads to the PJAC complex (POSH-JIP or SH3RF1/MAPK8IP apoptotic complex) with a 1:1 ratio. Interacts with SIAH1. Probably part of a signaling complex that may contain SH3RF1, MAPK8IP, DLK1, MAP2K4/MKK4, MAP2K7/MKK7, MAPK8/JNK1, MAPK9/JNK2, AKT1 and AKT2. Found in a complex with RAC2, MAP3K7/TAK1, MAP2K7/MKK7, MAPK8IP1/JIP1, MAPK8/JNK1 and MAPK9/JNK2. Found in a complex with RAC1, MAP3K11/MLK3, MAP2K7/MKK7, MAPK8IP1/JIP1 and MAPK8/JNK1. Interacts with SH3RF2. In terms of processing, phosphorylated at Ser-305 by AKT1 and AKT2. When phosphorylated, it has reduced ability to bind Rac. Post-translationally, autoubiquitinated. Ubiquitinated by SH3RF2, leading to proteasome-mediated degradation.

It is found in the cytoplasm. The protein localises to the perinuclear region. It localises to the cell projection. The protein resides in the lamellipodium. Its subcellular location is the golgi apparatus. It is found in the trans-Golgi network. The catalysed reaction is S-ubiquitinyl-[E2 ubiquitin-conjugating enzyme]-L-cysteine + [acceptor protein]-L-lysine = [E2 ubiquitin-conjugating enzyme]-L-cysteine + N(6)-ubiquitinyl-[acceptor protein]-L-lysine.. It functions in the pathway protein modification; protein ubiquitination. Has E3 ubiquitin-protein ligase activity. In the absence of an external substrate, it can catalyze self-ubiquitination. Stimulates ubiquitination of potassium channel KCNJ1, enhancing it's dynamin-dependent and clathrin-independent endocytosis. Acts as a scaffold protein that coordinates with MAPK8IP1/JIP1 in organizing different components of the JNK pathway, including RAC1 or RAC2, MAP3K11/MLK3 or MAP3K7/TAK1, MAP2K7/MKK7, MAPK8/JNK1 and/or MAPK9/JNK2 into a functional multiprotein complex to ensure the effective activation of the JNK signaling pathway. Regulates the differentiation of CD4(+) and CD8(+) T-cells and promotes T-helper 1 (Th1) cell differentiation. Regulates the activation of MAPK8/JNK1 and MAPK9/JNK2 in CD4(+) T-cells and the activation of MAPK8/JNK1 in CD8(+) T-cells. Plays a crucial role in the migration of neocortical neurons in the developing brain. Controls proper cortical neuronal migration and the formation of proximal cytoplasmic dilation in the leading process (PCDLP) in migratory neocortical neurons by regulating the proper localization of activated RAC1 and F-actin assembly. This is E3 ubiquitin-protein ligase SH3RF1 (Sh3rf1) from Rattus norvegicus (Rat).